A 475-amino-acid chain; its full sequence is Maintenance of mitochondrial morphology protein 1 (475 aa).

The Lumenal segment spans residues 1-14 (MSETFSPNLTFTEG). A helical membrane pass occupies residues 15 to 35 (FVLGQASFLIILLLFIRYVVF). Residues 36-475 (SPSEQIDHEG…VTPGQVGTSR (440 aa)) lie on the Cytoplasmic side of the membrane. In terms of domain architecture, SMP-LTD spans 80-278 (PAESSDWVNV…HPNHISLALP (199 aa)). 2 disordered regions span residues 321–381 (NPVE…GQPQ) and 394–475 (SYPH…GTSR). Positions 341 to 351 (PPTPLVQPPGT) are enriched in pro residues. Polar residues-rich tracts occupy residues 353 to 380 (PTLS…QGQP) and 394 to 403 (SYPHYNTYTL). Residues 442-464 (STTSSLTPSQSQSQFRFRGQFAS) show a composition bias toward low complexity.

The protein belongs to the MMM1 family. In terms of assembly, homodimer. Component of the ER-mitochondria encounter structure (ERMES) or MDM complex, composed of MMM1, MDM10, MDM12 and MDM34. An MMM1 homodimer associates with one molecule of MDM12 on each side in a pairwise head-to-tail manner, and the SMP-LTD domains of MMM1 and MDM12 generate a continuous hydrophobic tunnel for phospholipid trafficking.

It localises to the endoplasmic reticulum membrane. Component of the ERMES/MDM complex, which serves as a molecular tether to connect the endoplasmic reticulum (ER) and mitochondria. Components of this complex are involved in the control of mitochondrial shape and protein biogenesis, and function in nonvesicular lipid trafficking between the ER and mitochondria. The MDM12-MMM1 subcomplex functions in the major beta-barrel assembly pathway that is responsible for biogenesis of all outer membrane beta-barrel proteins, and acts in a late step after the SAM complex. The MDM10-MDM12-MMM1 subcomplex further acts in the TOM40-specific pathway after the action of the MDM12-MMM1 complex. Essential for establishing and maintaining the structure of mitochondria and maintenance of mtDNA nucleoids. This chain is Maintenance of mitochondrial morphology protein 1, found in Cryptococcus neoformans var. neoformans serotype D (strain B-3501A) (Filobasidiella neoformans).